The sequence spans 110 residues: Keratin, type II cytoskeletal 8 (110 aa).

The tract at residues 1 to 12 is head; the sequence is MSTSGPRAFSSR. The IF rod domain maps to 1–110; the sequence is MSTSGPRAFS…LDIEIATYRK (110 aa). Phosphoserine is present on residues S2, S4, S10, and S11. An Omega-N-methylarginine modification is found at R12. Residues 13–25 form a coil 1A region; sequence FASFIDKVRWSLL. A linker 1 region spans residues 26–39; sequence QQQKSNMDNMFESY. A Glycyl lysine isopeptide (Lys-Gly) (interchain with G-Cter in SUMO2) cross-link involves residue K29. The segment at 40–79 is coil 1B; the sequence is INNLRDVDEAYMNKVELESRLEGLTDEINFLRQIHEEEIR. K53 carries the N6-acetyllysine modification. S80 and S85 each carry phosphoserine. Residues 80–86 form a linker 12 region; that stretch reads SLDMDSI. Residues 87–110 are coil 2; it reads IAEVRHGDDLRRLALDIEIATYRK. The interval 88–99 is necessary for interaction with PNN; that stretch reads AEVRHGDDLRRL. A Glycyl lysine isopeptide (Lys-Gly) (interchain with G-Cter in SUMO2) cross-link involves residue K110.

Belongs to the intermediate filament family. As to quaternary structure, heterotetramer of two type I and two type II keratins. Forms a heterodimer with KRT18. Associates with KRT20. Interacts with PNN. When associated with KRT19, interacts with DMD. Interacts with TCHP. Interacts with APEX1. Interacts with GPER1. Interacts with EPPK1. Interacts with PKP1 and PKP2. O-glycosylated. O-GlcNAcylation at multiple sites increases solubility, and decreases stability by inducing proteasomal degradation. Post-translationally, O-glycosylated (O-GlcNAcylated), in a cell cycle-dependent manner.

It is found in the cytoplasm. Its subcellular location is the nucleus. It localises to the nucleoplasm. The protein resides in the nucleus matrix. In terms of biological role, together with KRT19, helps to link the contractile apparatus to dystrophin at the costameres of striated muscle. The sequence is that of Keratin, type II cytoskeletal 8 from Mesocricetus auratus (Golden hamster).